Reading from the N-terminus, the 111-residue chain is Putative protein YddJ (111 aa).

This is Putative protein YddJ (yddJ) from Escherichia coli (strain K12).